The sequence spans 876 residues: Alanine--tRNA ligase (876 aa).

Positions 560, 564, 662, and 666 each coordinate Zn(2+).

This sequence belongs to the class-II aminoacyl-tRNA synthetase family. Requires Zn(2+) as cofactor.

Its subcellular location is the cytoplasm. It carries out the reaction tRNA(Ala) + L-alanine + ATP = L-alanyl-tRNA(Ala) + AMP + diphosphate. Catalyzes the attachment of alanine to tRNA(Ala) in a two-step reaction: alanine is first activated by ATP to form Ala-AMP and then transferred to the acceptor end of tRNA(Ala). Also edits incorrectly charged Ser-tRNA(Ala) and Gly-tRNA(Ala) via its editing domain. In Synechococcus sp. (strain ATCC 27144 / PCC 6301 / SAUG 1402/1) (Anacystis nidulans), this protein is Alanine--tRNA ligase.